A 192-amino-acid polypeptide reads, in one-letter code: 3-isopropylmalate dehydratase small subunit (192 aa).

The protein belongs to the LeuD family. LeuD type 1 subfamily. In terms of assembly, heterodimer of LeuC and LeuD.

The enzyme catalyses (2R,3S)-3-isopropylmalate = (2S)-2-isopropylmalate. Its pathway is amino-acid biosynthesis; L-leucine biosynthesis; L-leucine from 3-methyl-2-oxobutanoate: step 2/4. In terms of biological role, catalyzes the isomerization between 2-isopropylmalate and 3-isopropylmalate, via the formation of 2-isopropylmaleate. The chain is 3-isopropylmalate dehydratase small subunit from Zymomonas mobilis subsp. mobilis (strain ATCC 31821 / ZM4 / CP4).